The following is a 505-amino-acid chain: Neuronal acetylcholine receptor subunit alpha-3 (505 aa).

The signal sequence occupies residues Met-1–Ala-31. Over Ser-32–Ile-250 the chain is Extracellular. Asn-55 and Asn-172 each carry an N-linked (GlcNAc...) asparagine glycan. 2 disulfides stabilise this stretch: Cys-159–Cys-173 and Cys-223–Cys-224. A helical membrane pass occupies residues Pro-251 to Pro-266. Residues Ser-267–Asp-268 lie on the Cytoplasmic side of the membrane. A helical membrane pass occupies residues Cys-269–Val-285. Topologically, residues Phe-286–Tyr-307 are extracellular. A helical membrane pass occupies residues Leu-308–Leu-326. Residues Asn-327–Val-474 are Cytoplasmic-facing. A phosphoserine mark is found at Ser-413 and Ser-416. Residues Ile-475–Gly-493 form a helical membrane-spanning segment. At Leu-494–Ala-505 the chain is on the extracellular side.

It belongs to the ligand-gated ion channel (TC 1.A.9) family. Acetylcholine receptor (TC 1.A.9.1) subfamily. Alpha-3/CHRNA3 sub-subfamily. Neuronal AChR is composed of two different types of subunits: alpha and beta. CHRNA3/Alpha-3 subunit can be combined to CHRNA5/alpha-5, CHRNB2/beta-2 CHRNB3/beta-3 or CHRNB4/beta-4 to give rise to functional receptors. Forms stoichiometries such as (CHRNA3)2:(CHRNB4)3 or (CHRNA3:CHRNB4)2:CHRNB3. Part of a complex composed of STUB1/CHIP, VCP/p97, CHRNA3, and UBXN2A that modulates the ubiquitination and endoplasmic reticulum-associated degradation (ERAD) of CHRNA3. Within the complex UBXN2A acts as a scaffold protein required for the interaction of CHRNA3 with VCP/p97, this interaction also inhibits CHRNA3 ubiquitination by STUB1/CHIP and subsequently ERAD. Interacts with UBXN2A (via SEP domain), the interaction is required for the interaction of CHRNA3 in the STUB1:VCP:UBXN2A complex. Interacts with RIC3; which is required for proper folding and assembly. Interacts with LYPD6. Ubiquitinated; by STUB1/CHIP and thereafter degraded by the 26S proteosome complex.

The protein resides in the synaptic cell membrane. It is found in the cell membrane. The protein localises to the endoplasmic reticulum. Its subcellular location is the golgi apparatus. The enzyme catalyses Ca(2+)(in) = Ca(2+)(out). The catalysed reaction is K(+)(in) = K(+)(out). It carries out the reaction Na(+)(in) = Na(+)(out). Activated by a myriad of ligands such as acetylcholine, cytisine, nicotine, choline and epibatidine. The heteropentamer CHRNA3:CHRNB2 activity is blocked by alpha-conotoxins ImI, ImII, PnIA, GID and MII. The heteropentamer CHRNA3:CHRNB4 activity is blocked by the alpha-conotoxin ImI and AuIB. Its function is as follows. Component of neuronal acetylcholine receptors (nAChRs) that function as pentameric, ligand-gated cation channels with high calcium permeability among other activities. nAChRs are excitatory neurotrasnmitter receptors formed by a collection of nAChR subunits known to mediate synaptic transmission in the nervous system and the neuromuscular junction. Each nAchR subunit confers differential attributes to channel properties, including activation, deactivation and desensitization kinetics, pH sensitivity, cation permeability, and binding to allosteric modulators. CHRNA3 forms heteropentameric neuronal acetylcholine receptors with CHRNB2 and CHRNB4, with CHRNA5, and CHRNB3 as accesory subunits. CHRNA3:CHRNB4 being predominant in neurons of the autonomic ganglia, it is known as ganglionic nicotinic receptor. CHRNA3:CHRNB4 or CHRNA3:CHRNA5:CHRNB4 play also an important role in the habenulo-interpeduncular tract, modulating the mesolimbic dopamine system and affecting reward circuits and addiction. Hypothalamic CHRNA3:CHRNB4 nAChR activation by nicotine leads to activation of POMC neurons and a decrease in food intake. Also expressed in the urothelium where it modulates reflex bladder activity by increasing intracellular calcium through extracellular influx and basal ATP release. This chain is Neuronal acetylcholine receptor subunit alpha-3, found in Homo sapiens (Human).